The primary structure comprises 123 residues: Urotensin-2 (123 aa).

The signal sequence occupies residues 1–20 (MDRVPFCCLLFIGLLNPLLS). Propeptides lie at residues 21–104 (LPVT…LART) and 107–109 (QHK). Positions 57 to 88 (RQTMGTEAGESPGEAGPSTETPTPRGSMRKAF) are disordered. A disulfide bridge links cysteine 117 with cysteine 122.

Belongs to the urotensin-2 family. Brain specific. Predominantly expressed in motoneurons of the brainstem and spinal cord.

It localises to the secreted. In terms of biological role, highly potent vasoconstrictor. The protein is Urotensin-2 (Uts2) of Mus musculus (Mouse).